A 444-amino-acid polypeptide reads, in one-letter code: ATPase PAAT (444 aa).

Phosphoserine is present on residues Ser177, Ser182, and Ser254. The disordered stretch occupies residues 279–300 (SAQPSGEGNTTNHDEGHLMPQN). The segment covering 280–289 (AQPSGEGNTT) has biased composition (polar residues). Position 302 is a phosphoserine (Ser302). Residues 424-444 (PPPGMPLRHYDSRERLSNGER) are disordered. The span at 431-444 (RHYDSRERLSNGER) shows a compositional bias: basic and acidic residues.

Homodimer. Interacts with ABCB7, ABCB8/MITOSUR and ABCB10.

It localises to the cytoplasm. The protein resides in the mitochondrion. It catalyses the reaction ATP + H2O = ADP + phosphate + H(+). In terms of biological role, ATPase that regulates mitochondrial ABC transporters ABCB7, ABCB8/MITOSUR and ABCB10. Regulates mitochondrial ferric concentration and heme biosynthesis and plays a role in the maintenance of mitochondrial homeostasis and cell survival. The protein is ATPase PAAT of Mus musculus (Mouse).